The primary structure comprises 5412 residues: Mucin-4 (5412 aa).

A signal peptide spans 1–28 (MKGARWRRVPWVSLSCLCLCLLPHVVPG). 2 disordered regions span residues 40 to 87 (TAAP…TTSK) and 142 to 249 (TSTD…ATSS). Residues 43-4241 (PVTSTGSTTA…SVSTGHATPL (4199 aa)) are variable number of tandem repeats (VNTR). Residues 142–163 (TSTDSTLGNTEETSTAGTESST) are compositionally biased toward low complexity. O-linked (GalNAc...) threonine glycans are attached at residues Thr154 and Thr156. Residues 164-199 (PVTSAVSITAGQEGQSRTTSWRTSIQDTSASSQNHW) show a composition bias toward polar residues. Positions 200–223 (TRSTQTTRESQTSTLTHRTTSTPS) are enriched in low complexity. Polar residues predominate over residues 224 to 249 (FSPSVHNVTGTVSQKTSPSGETATSS). Residue Asn230 is glycosylated (N-linked (GlcNAc...) asparagine). A glycan (O-linked (GalNAc...) threonine) is linked at Thr234. Asn255 carries N-linked (GlcNAc...) asparagine glycosylation. Composition is skewed to polar residues over residues 267 to 285 (TTSTGSTLGNPGETSSVPV), 306 to 328 (SPATFSRTSTQDTTAFSKNHQTQ), and 358 to 367 (GFNPSGTVSQ). 16 disordered regions span residues 267-286 (TTSTGSTLGNPGETSSVPVT), 303-328 (EGQSPATFSRTSTQDTTAFSKNHQTQ), 353-383 (LSSPSGFNPSGTVSQETFPSGETTTSSPSSV), 438-473 (LSPSSLPPKISTAFHTQQSEGAETTGRPHERSSFSP), 488-580 (WPSS…ALLS), 592-853 (TATS…ASAS), 868-963 (VPGT…SGSG), 983-1864 (SSAS…DASS), 1878-2078 (ASSV…TGHA), 2111-2220 (TALH…ASTG), 2232-2814 (SAST…TGHA), 2837-3306 (IPSS…SSVS), 3320-3580 (SAST…VSTG), 3592-3644 (SVST…VSTG), 3656-3756 (SVST…ASTG), and 3769-4223 (VSTG…GHAT). Residues Thr364, Thr369, and Thr376 are each glycosylated (O-linked (GalNAc...) threonine). Positions 368–383 (ETFPSGETTTSSPSSV) are enriched in low complexity. Composition is skewed to polar residues over residues 450-459 (AFHTQQSEGA), 488-526 (WPSSFSSKGHTTWSQTELPSTSTGAATRLVTGNPSTGTA), and 546-557 (TTYSSHSTTLPK). Low complexity-rich tracts occupy residues 558-577 (TTGAGAQTQWTQETGTTGEA) and 615-627 (STNHSTIHSTSTS). Asn617 carries an N-linked (GlcNAc...) asparagine glycan. 3 O-linked (GalNAc...) threonine glycosylation sites follow: Thr620, Thr666, and Thr688. The segment covering 628-677 (PQESPAVSQRGHTQAPQTTQESQTTRSVSPMTDTKTVTTPGSSFTASGHS) has biased composition (polar residues). The span at 705 to 717 (TTQAPTTALQAAP) shows a compositional bias: low complexity. Over residues 729–746 (GTSLSKTGALTLANSVVS) the composition is skewed to polar residues. O-linked (GalNAc...) threonine glycosylation is present at Thr747. Low complexity predominate over residues 756–771 (TSASASTSPDTAAAMT). Positions 772–789 (HTHQAESTEASGQTQTSE) are enriched in polar residues. Positions 790–828 (PASSGSRTTSAGTATPSSSGASGTTPSGSEGISTSGETT) are enriched in low complexity. 6 O-linked (GalNAc...) threonine glycosylation sites follow: Thr797, Thr798, Thr802, Thr804, Thr813, and Thr814. Residues 829-852 (RFSSNPSRDSHTTQSTTELLSASA) are compositionally biased toward polar residues. O-linked (GalNAc...) threonine glycosylation is found at Thr881, Thr886, and Thr892. The span at 885-903 (PTGQSSPTSPSASPQETAA) shows a compositional bias: low complexity. Polar residues predominate over residues 907 to 928 (MAQTQRTRTSRGSDTISLASQA). Residues 929 to 950 (TDTFSTVPPTPPSITSTGLTSP) are compositionally biased toward low complexity. Thr931, Thr934, Thr938, Thr943, Thr945, Thr948, Thr952, Thr954, Thr1003, Thr1007, Thr1012, Thr1019, Thr1022, Thr1023, Thr1028, Thr1030, Thr1035, Thr1039, Thr1044, Thr1051, Thr1055, Thr1060, Thr1062, Thr1067, Thr1071, Thr1076, Thr1083, Thr1086, Thr1087, Thr1092, Thr1094, Thr1099, Thr1103, Thr1108, Thr1110, Thr1115, Thr1118, Thr1119, Thr1124, Thr1126, Thr1131, Thr1135, Thr1172, Thr1179, Thr1182, Thr1183, Thr1188, Thr1195, Thr1199, Thr1204, Thr1236, Thr1243, Thr1246, and Thr1247 each carry an O-linked (GalNAc...) threonine glycan. The span at 951–963 (QTETHTLSPSGSG) shows a compositional bias: polar residues. Positions 1007-1024 (TPLPVTSPSSVSTGHTTP) are enriched in low complexity. The segment covering 1028 to 1054 (TDTSSESTGHVTPLPVTSFSSASTGDS) has biased composition (polar residues). The span at 1060–1086 (TDTSSASTGHVTPLPVTSLSSASTGDT) shows a compositional bias: polar residues. Over residues 1092–1118 (TDTSSASTGHATSLPVTDTSSVSTGHT) the composition is skewed to polar residues. 2 stretches are compositionally biased toward polar residues: residues 1124–1150 (TDTSSASTGHATSLPVTDTSSVSTGHT) and 1157–1197 (DASS…STGH). 2 stretches are compositionally biased toward polar residues: residues 1204-1213 (TDTSSASTGH) and 1221-1246 (DASSVSTDHATSLPVTIPSAASTGHT). Positions 1252 to 1262 (TDTSSASTGQA) are enriched in polar residues. A compositionally biased stretch (low complexity) spans 1263–1279 (TSLLVTDTSSVSTGDTT). Thr1278, Thr1279, Thr1284, Thr1286, Thr1291, Thr1295, Thr1300, Thr1307, Thr1311, Thr1316, Thr1323, Thr1326, Thr1332, Thr1339, Thr1342, Thr1343, and Thr1348 each carry an O-linked (GalNAc...) threonine glycan. Residues 1281–1325 (LPVTSTSSASTGHVTPLHVTSPSSASTGHATPLPVTSLSSASTGD) show a composition bias toward polar residues. Polar residues predominate over residues 1332 to 1342 (TSPSSASTGDT). Composition is skewed to polar residues over residues 1349 to 1358 (DASSVSTGHT) and 1365 to 1405 (DASS…STGH). O-linked (GalNAc...) threonine glycans are attached at residues Thr1380, Thr1387, Thr1390, Thr1391, Thr1396, Thr1403, Thr1407, Thr1412, Thr1444, Thr1451, Thr1454, and Thr1455. Polar residues-rich tracts occupy residues 1412–1421 (TDTSSASTGH) and 1429–1454 (DASSVSTDHATSLPVTIPSAASTGHT). Positions 1460-1470 (TDTSSASTGQA) are enriched in polar residues. Positions 1471–1487 (TSLLVTDTSSVSTGDTT) are enriched in low complexity. O-linked (GalNAc...) threonine glycosylation is found at Thr1486, Thr1487, Thr1492, Thr1494, Thr1499, Thr1503, Thr1508, Thr1515, Thr1519, Thr1524, Thr1531, Thr1534, Thr1540, Thr1547, Thr1550, Thr1551, Thr1556, Thr1563, Thr1566, Thr1567, Thr1572, Thr1579, Thr1582, Thr1583, Thr1588, Thr1590, Thr1598, Thr1599, Thr1604, Thr1611, Thr1614, Thr1615, Thr1620, Thr1622, Thr1627, and Thr1630. Residues 1489-1533 (LPVTSTSSASTGHVTPLHVTSPSSASTGHATPLPVTSLSSASTGD) are compositionally biased toward polar residues. Residues 1540 to 1550 (TSPSSASTGDT) show a composition bias toward polar residues. A compositionally biased stretch (polar residues) spans 1557 to 1582 (DASSVSTGHTTPLPVTSPSSASTGHT). The span at 1588 to 1614 (TDTSSASKGDTTPLPVTSPSSASTGHT) shows a compositional bias: polar residues. A compositionally biased stretch (low complexity) spans 1620-1631 (TDTSSASTGDTT). The span at 1633-1661 (LPVTNASSLSTGHATPLHVTSPSSASTGH) shows a compositional bias: polar residues. A glycan (N-linked (GlcNAc...) asparagine) is linked at Asn1637. Residues Thr1659, Thr1663, Thr1668, Thr1670, Thr1675, Thr1679, Thr1716, Thr1723, Thr1726, Thr1727, Thr1732, Thr1764, Thr1766, Thr1812, Thr1819, Thr1822, Thr1823, Thr1828, Thr1835, Thr1838, Thr1839, Thr1844, Thr1854, and Thr1855 are each glycosylated (O-linked (GalNAc...) threonine). Residues 1668–1679 (TSTSSASTGHAT) are compositionally biased toward low complexity. 3 stretches are compositionally biased toward polar residues: residues 1701 to 1741 (DVSS…STGH), 1749 to 1773 (DASSASTGQATPLPVTDTSSVSTAH), and 1812 to 1822 (TSPSSASTGDT). Over residues 1828 to 1840 (TDASSASTGDTTS) the composition is skewed to low complexity. Composition is skewed to polar residues over residues 1841–1864 (LPVTIPSSASSGHTTSLPVTDASS), 1892–1902 (TDTNSASTGDT), and 1909–1950 (DASS…SGHT). Residues Thr1931, Thr1934, Thr1935, Thr1940, Thr1950, Thr1951, Thr1956, Thr1963, Thr1995, Thr1999, Thr2004, Thr2006, Thr2015, Thr2020, Thr2027, Thr2030, Thr2031, Thr2036, Thr2038, Thr2047, Thr2052, Thr2062, Thr2063, Thr2132, Thr2137, Thr2139, Thr2142, Thr2143, Thr2148, Thr2150, Thr2155, Thr2159, Thr2164, Thr2180, Thr2182, Thr2187, Thr2191, Thr2196, Thr2198, Thr2203, Thr2207, Thr2244, Thr2254, and Thr2255 are each glycosylated (O-linked (GalNAc...) threonine). A compositionally biased stretch (polar residues) spans 1957–1981 (DASSVPTGHATSLPVTDASSVSTGH). The segment covering 2004-2030 (TDTSSVSTGQATPLPVTSLSSASTGDT) has biased composition (polar residues). Positions 2036 to 2077 (TDTSSASTGQDTPLPVTSLSSVSTGDTTPLPVTNPSSASTGH) are enriched in polar residues. A compositionally biased stretch (low complexity) spans 2125–2146 (DTTPLPVTSPSSTSTGDTTPLP). The span at 2148 to 2189 (TETSSVSTGHATSLPVTDTSSASTGHATSLPVTDTSSASTGH) shows a compositional bias: polar residues. Composition is skewed to polar residues over residues 2196–2219 (TDTSSASTGQATPLPVTSPSSAST) and 2232–2254 (SASTGQATPLPVTSLSSASTGDT). Residues 2261–2270 (DASSVSTGHA) are compositionally biased toward polar residues. Over residues 2271–2283 (TSLPVTSLSSVST) the composition is skewed to low complexity. 26 O-linked (GalNAc...) threonine glycosylation sites follow: Thr2283, Thr2286, Thr2287, Thr2292, Thr2299, Thr2303, Thr2308, Thr2324, Thr2331, Thr2334, Thr2335, Thr2340, Thr2347, Thr2351, Thr2356, Thr2363, Thr2366, Thr2367, Thr2372, Thr2382, Thr2383, Thr2388, Thr2395, Thr2398, Thr2399, and Thr2406. Positions 2284–2301 (GDTTPLPVTSPSSASTGH) are enriched in polar residues. Residues 2309 to 2349 (DASSASTGHATPLPVTSLSSASTGDTTPLPVTSPSSASTGH) are compositionally biased toward polar residues. Low complexity predominate over residues 2366–2399 (TTPLPVTSSSSASSGHTTPLPVTDASSASTGDTT). 2 stretches are compositionally biased toward polar residues: residues 2404-2413 (TDTSSASTGH) and 2421-2445 (GLSSASTGDTTRLPVTNVSSASTGH). Asn2437 carries an N-linked (GlcNAc...) asparagine glycan. Thr2452, Thr2454, Thr2459, Thr2462, Thr2463, Thr2468, Thr2500, Thr2507, Thr2510, Thr2511, Thr2516, Thr2518, Thr2523, and Thr2526 each carry an O-linked (GalNAc...) threonine glycan. The segment covering 2452-2471 (TSTSSASTGDTTPLPGTDTS) has biased composition (low complexity). Residues 2485 to 2510 (DASSVSTGDTTRLPVTSPSSASTGHT) show a composition bias toward polar residues. The span at 2517 to 2573 (DTPSASTGDTTPLPVTNASSLSTRHATSLHVTSPSSASTGHATSLPVTDTSAASTGH) shows a compositional bias: polar residues. Asn2533 is a glycosylation site (N-linked (GlcNAc...) asparagine). 24 O-linked (GalNAc...) threonine glycosylation sites follow: Thr2564, Thr2566, Thr2571, Thr2575, Thr2580, Thr2582, Thr2587, Thr2590, Thr2591, Thr2596, Thr2598, Thr2619, Thr2622, Thr2623, Thr2628, Thr2660, Thr2667, Thr2670, Thr2671, Thr2676, Thr2683, Thr2687, Thr2692, and Thr2694. Residues 2580-2591 (TSTSSASTGDTT) show a composition bias toward low complexity. Composition is skewed to polar residues over residues 2597-2637 (DTYS…STGH) and 2645-2691 (DASS…SLPV). Over residues 2692–2704 (TDTSSASTGDTTS) the composition is skewed to low complexity. The span at 2705–2723 (LPVTDTSSAYTGDTTSLPV) shows a compositional bias: polar residues. Over residues 2724–2735 (TDTSSSSTGDTT) the composition is skewed to low complexity. 8 O-linked (GalNAc...) threonine glycosylation sites follow: Thr2740, Thr2742, Thr2750, Thr2751, Thr2756, Thr2758, Thr2763, and Thr2767. A compositionally biased stretch (polar residues) spans 2740-2750 (TETSSVSTGDT). Positions 2756–2798 (TDTSSASTGHATPLPVTNTSSVSTGHATPLHVTSPSSASTGHT) are enriched in polar residues. A glycan (N-linked (GlcNAc...) asparagine) is linked at Asn2773. 7 O-linked (GalNAc...) threonine glycosylation sites follow: Thr2779, Thr2783, Thr2788, Thr2795, Thr2798, Thr2799, and Thr2804. Polar residues-rich tracts occupy residues 2805 to 2814 (DASSVSTGHA) and 2837 to 2846 (IPSSASSGHT). O-linked (GalNAc...) threonine glycosylation is found at Thr2846, Thr2847, and Thr2852. The segment covering 2853-2877 (DASSVSTGHATSLPVTDASSVSTGH) has biased composition (polar residues). Low complexity predominate over residues 2895–2907 (TPLPLTSLSSVST). O-linked (GalNAc...) threonine glycosylation is found at Thr2910, Thr2911, Thr2916, Thr2918, Thr2923, Thr2927, Thr2932, Thr2939, Thr2942, Thr2943, Thr2948, Thr2950, Thr2955, Thr2959, Thr2966, Thr2971, and Thr2975. Over residues 2916–2942 (TDTSSASTGQATPLPVTSLSSVSTGDT) the composition is skewed to polar residues. The segment covering 2948–2973 (TDTSSASTGHATSLPVTDTSSASTGH) has biased composition (polar residues). Polar residues-rich tracts occupy residues 2980-2989 (TDTSSASTGH) and 3009-3037 (LPVTDTSSISTGHATPLHVTSPSSASTGH). O-linked (GalNAc...) threonine glycans are attached at residues Thr3023, Thr3028, Thr3035, and Thr3039. The span at 3044–3069 (TDTSSASTGHANPLHVTSPSSASTGH) shows a compositional bias: polar residues. 40 O-linked (GalNAc...) threonine glycosylation sites follow: Thr3071, Thr3076, Thr3078, Thr3083, Thr3087, Thr3092, Thr3099, Thr3102, Thr3103, Thr3108, Thr3115, Thr3118, Thr3119, Thr3124, Thr3126, Thr3131, Thr3135, Thr3140, Thr3142, Thr3147, Thr3150, Thr3151, Thr3156, Thr3158, Thr3163, Thr3167, Thr3172, Thr3179, Thr3182, Thr3183, Thr3188, Thr3220, Thr3227, Thr3230, Thr3231, Thr3236, Thr3243, Thr3247, Thr3252, and Thr3254. Polar residues predominate over residues 3076 to 3118 (TDTSSASTGHATPLPVTSLSSVSTGDTTPLPVTSPSSASTGHT). A compositionally biased stretch (polar residues) spans 3124–3134 (TDTSSASTGQA). Low complexity predominate over residues 3140–3151 (TSTSSASTGDTT). Polar residues-rich tracts occupy residues 3156 to 3197 (TDTS…STGH) and 3205 to 3251 (DASS…SLPV). The span at 3252 to 3264 (TDTSSASTGDTTS) shows a compositional bias: low complexity. A compositionally biased stretch (polar residues) spans 3265 to 3283 (LPVTDTSSAYTGDTTSLPV). Positions 3284–3295 (TDTSSSSTGDTT) are enriched in low complexity. Residues Thr3294, Thr3332, Thr3339, Thr3342, Thr3343, Thr3348, Thr3350, Thr3355, and Thr3359 are each glycosylated (O-linked (GalNAc...) threonine). The segment covering 3320 to 3337 (SASTGHATPLHVTSPSSA) has biased composition (polar residues). Positions 3338–3356 (STGDTTPVPVTDTSSVSTG) are enriched in low complexity. 2 stretches are compositionally biased toward polar residues: residues 3365–3374 (GLSSASTGDT) and 3381–3405 (DISSASTGQATPLPVTNTSSVSTGD). N-linked (GlcNAc...) asparagine glycosylation occurs at Asn3397. Residues Thr3398, Thr3403, Thr3406, Thr3412, Thr3419, Thr3423, Thr3428, Thr3430, Thr3435, Thr3439, and Thr3444 are each glycosylated (O-linked (GalNAc...) threonine). The span at 3412 to 3421 (TSPSSASTGH) shows a compositional bias: polar residues. The span at 3428-3471 (TSTSSASTGHATPVPVTSTSSASTGHTTPLPVTDTSSASTGDTT) shows a compositional bias: low complexity. Ser3445 carries an O-linked (GalNAc...) serine glycan. Residues Thr3446, Thr3451, Thr3454, Thr3455, Thr3460, Thr3462, Thr3467, Thr3470, Thr3471, Thr3476, Thr3483, Thr3486, Thr3487, Thr3492, Thr3499, Thr3502, Thr3504, Thr3508, Thr3515, Thr3519, Thr3524, Thr3526, Thr3531, Thr3535, Thr3540, Thr3547, Thr3550, Thr3551, Thr3556, Thr3567, Thr3614, Thr3615, Thr3622, Thr3678, Thr3679, Thr3686, Thr3691, Thr3695, Thr3700, Thr3710, Thr3711, Thr3716, Thr3718, Thr3723, Thr3727, Thr3732, Thr3739, Thr3743, Thr3748, Thr3780, Thr3787, Thr3790, Thr3791, Thr3796, Thr3798, Thr3803, Thr3807, Thr3812, Thr3822, Thr3823, Thr3828, Thr3835, Thr3839, Thr3844, Thr3851, Thr3854, Thr3860, Thr3867, Thr3871, Thr3876, Thr3883, Thr3886, Thr3887, Thr3892, Thr3894, Thr3899, Thr3903, Thr3935, Thr3940, Thr3942, Thr3947, Thr3950, Thr3951, Thr3956, Thr3958, Thr3963, Thr3967, Thr3972, Thr3979, Thr3983, Thr3988, Thr3990, Thr3995, Thr3999, Thr4004, Thr4006, Thr4011, Thr4015, and Thr4020 are each glycosylated (O-linked (GalNAc...) threonine). The span at 3473–3486 (LPVTSPSSASTGHT) shows a compositional bias: polar residues. Over residues 3493 to 3517 (IPSSASTGDTSTLPVTGASSASTGH) the composition is skewed to polar residues. A compositionally biased stretch (polar residues) spans 3524–3550 (TDTSSVSTGHATPLPVTSLSSVSTGDT). Residues 3557-3580 (DASSASTGQATPLPVTSLSSVSTG) are compositionally biased toward polar residues. The segment covering 3604–3615 (TDTSSASTGDTT) has biased composition (low complexity). Over residues 3620-3644 (TDTSSASTGQATPLPVTSLSSVSTG) the composition is skewed to polar residues. Positions 3668–3679 (TDTSSASTGDTT) are enriched in low complexity. A compositionally biased stretch (polar residues) spans 3684-3694 (TDTSSASTGQA). Over residues 3710–3728 (TTPLPVTSTSSVSTGHVTP) the composition is skewed to low complexity. Positions 3730-3741 (HVTSPSSASTGH) are enriched in polar residues. Over residues 3780–3791 (TDASSASTGDTT) the composition is skewed to low complexity. The segment covering 3796–3822 (TDTSSASTGQATPLPVTSLSSVSTGDT) has biased composition (polar residues). Positions 3860–3869 (TSPSSASTGH) are enriched in polar residues. Over residues 3877–3886 (GLSSASTGDT) the composition is skewed to polar residues. Polar residues predominate over residues 3892–3901 (TDTSSASTRH). Positions 3940 to 3951 (TSTSSASTGDTT) are enriched in low complexity. Polar residues predominate over residues 3956–3981 (TDTSSVSTGHATSLPVTSRSSASTGH). A compositionally biased stretch (polar residues) spans 3988–3997 (TDTSSVSTGH). Low complexity predominate over residues 3999–4011 (TPLPVTSTSSVST). The span at 4018 to 4029 (PVTSPSSASTGH) shows a compositional bias: polar residues. O-linked (GalNAc...) serine glycans are attached at residues Ser4021, Ser4023, Ser4024, and Ser4026. Residues Thr4027, Thr4031, and Thr4036 are each glycosylated (O-linked (GalNAc...) threonine). The span at 4030–4047 (ATPVPVTSTSSASTGDTT) shows a compositional bias: low complexity. The O-linked (GalNAc...) serine glycan is linked to Ser4037. 4 O-linked (GalNAc...) threonine glycosylation sites follow: Thr4038, Thr4043, Thr4046, and Thr4047. Residues 4049-4093 (LPVTNASSLSTGHATPLHVTSPSSASRGDTSTLPVTDASSASTGH) show a composition bias toward polar residues. N-linked (GlcNAc...) asparagine glycosylation is present at Asn4053. 2 O-linked (GalNAc...) threonine glycosylation sites follow: Thr4078 and Thr4084. Over residues 4095–4107 (TPLPLTSLSSVST) the composition is skewed to low complexity. Residues Thr4110, Thr4111, Thr4116, Thr4118, Thr4123, Thr4127, Thr4132, Thr4139, Thr4142, Thr4143, Thr4148, Thr4158, Thr4159, Thr4164, Thr4171, Thr4175, Thr4180, Thr4182, Thr4187, Thr4190, Thr4191, Thr4196, Thr4198, Thr4203, Thr4207, Thr4212, Thr4214, Thr4219, Thr4223, and Thr4239 are each glycosylated (O-linked (GalNAc...) threonine). Polar residues predominate over residues 4116–4142 (TDTSSASTGQATPLPVTSLSSVSTGDT). The segment covering 4149 to 4173 (IPSSASSGHTTSLPVTDASSVSTGH) has biased composition (polar residues). A compositionally biased stretch (low complexity) spans 4180 to 4191 (TSTSSASTGDTT). Positions 4196-4205 (TDTSSASTGH) are enriched in polar residues. Positions 4212–4223 (TDTSSASTGHAT) are enriched in polar residues. Low complexity predominate over residues 4242–4254 (AVSSATSASTVSS). The interval 4242-4288 (AVSSATSASTVSSDSPLKMETPGMTTPSLKTDGGRRTATSPPPTTSQ) is disordered. Thr4272, Thr4278, Thr4280, Thr4289, Thr4293, and Thr4297 each carry an O-linked (GalNAc...) threonine glycan. The NIDO domain occupies 4397 to 4552 (PFWDDADFST…GLQFYRLHRE (156 aa)). Residues 4553-4668 (ERPNYRLECL…YLCALYQQRR (116 aa)) form the AMOP domain. A VWFD domain is found at 4680-4880 (QPAWMFGDPH…TWQINGTGLL (201 aa)). 16 N-linked (GlcNAc...) asparagine glycosylation sites follow: Asn4715, Asn4768, Asn4787, Asn4796, Asn4831, Asn4852, Asn4875, Asn4902, Asn4928, Asn4946, Asn4982, Asn4997, Asn5045, Asn5052, Asn5100, and Asn5119. The EGF-like 1 domain occupies 5118-5157 (QNQSCPVNYCYNQGHCYISQTLGCQPMCTCPPAFTDSRCF). 3 disulfides stabilise this stretch: Cys5122–Cys5133, Cys5127–Cys5145, and Cys5147–Cys5156. Asn5185, Asn5192, and Asn5292 each carry an N-linked (GlcNAc...) asparagine glycan. The 40-residue stretch at 5321 to 5360 (VSPCSRGYCDHGGQCQHLPSGPRCSCVSFSIYTAWGEHCE) folds into the EGF-like 2 domain. 3 cysteine pairs are disulfide-bonded: Cys5324-Cys5335, Cys5329-Cys5344, and Cys5346-Cys5359. The helical transmembrane segment at 5369 to 5389 (FFGIFFGALGGLLLLGVGTFV) threads the bilayer.

As to quaternary structure, a heterodimeric complex, composed of a mucin-4 alpha chain and a cysteine-rich transmembrane mucin-4 beta chain. Mucin-4 beta chain interacts with ERBB2 via the EGF-like domain 1. In nonpolarized cells, associates with ERBB2 and ERBB3. Proteolytically cleaved into 2 chains, mucin-4 alpha chain and mucin-4 beta chain. Post-translationally, highly O-glycosylated. In terms of processing, is predominantly N-glycosylated. As to expression, expressed in the thymus, thyroid, lung, trachea, esophagus, stomach, small intestine, colon, testis, prostate, ovary, uterus, placenta, and mammary and salivary glands. Expressed in carcinomas arising from some of these epithelia, such as lung cancers, squamous cell carcinomas of the upper aerodigestive tract, mammary carcinomas, biliary tract, colon, and cervix cancers. Minimally or not expressed in the normal pancreas or chronic pancreatitis, but is highly expressed in pancreatic tumors and pancreatic tumor cell lines.

The protein localises to the cell membrane. Its subcellular location is the secreted. Functionally, membrane-bound mucin, a family of highly glycosylated proteins that constitute the major component of the mucus, the slimy and viscous secretion covering epithelial surfaces. These glycoproteins play important roles in the protection of the epithelium and are implicated in epithelial renewal and differentiation. Regulates cellular behavior through both anti-adhesive effects on cell-cell and cell-extracellular matrix interactions and its ability to act as an intramembrane ligand for ERBB2. Plays an important role in proliferation and differentiation of epithelial cells by inducing specific phosphorylation of ERBB2. In polarized epithelial cells, segregates ERBB2 and other ERBB receptors and prevents ERBB2 from acting as a coreceptor. The interaction with ERBB2 leads to enhanced expression of CDKN1B. The formation of a MUC4-ERBB2-ERBB3-NRG1 complex leads to down-regulation of CDKN1B, resulting in repression of apoptosis and stimulation of proliferation. Its ability to promote tumor growth may be mainly due to repression of apoptosis as opposed to proliferation. This Homo sapiens (Human) protein is Mucin-4 (MUC4).